The following is a 928-amino-acid chain: Putative replication origin binding protein (928 aa).

The region spanning 386–516 (NIVPPKGHIT…QVLRDILMTA (131 aa)) is the Helicase ATP-binding domain. 399 to 406 (ASLGTGKT) serves as a coordination point for ATP. Positions 484-487 (DECD) match the DEAD box motif.

Belongs to the herpesviridae oribp family.

Its function is as follows. Displays bipolar ssDNA and dsDNA unwinding activities that require the same core catalytic residues for unwinding in either direction, the 3'-5' direction being more robust. The sequence is that of Putative replication origin binding protein from Escherichia coli (Enterobacteria phage T5).